Reading from the N-terminus, the 1342-residue chain is MVYSYTEKKRIRKDFGKRPQVLDVPYLLSIQLDSFQKFIEQDPEGQYGLEAAFRSVFPIQSYSGNSELQYVSYRLGEPVFDVQECQIRGVTYSAPLRVKLRLVIYEREAPEGTVKDIKEQEVYMGEIPLMTDNGTFVINGTERVIVSQLHRSPGVFFDSDKGKTHSSGKVLYNARIIPYRGSWLDFEFDPKDNLFVRIDRRRKLPATIILRALNYTTEQILDLFFEKVIFEIRDNKLQMELVPERLRGETASFDIEANGKVYVEKGRRITARHIRQLEKDDVKLIEVSVEYIAGKVVAKDYIDESTGELICAANMELSLDLLAKLSQSGHKRIETLFTNDLDHGPYISETLRVDPTNDRLSALVEIYRMMRPGEPPTREAAESLFENLFFSEDRYDLSAVGRMKFNRSLLREEIEGSGILSKDDIIDVMKKLIDIRNGKGEVDDIDHLGNRRIRSVGEMAENQFRVGLVRVERAVKERLSLGDLDTLMPQDMINAKPISAAVKEFFGSSQLSQFMDQNNPLSEITHKRRISALGPGGLTRERAGFEVRDVHPTHYGRVCPIETPEGPNIGLINSLSVYAQTNEYGFLETPYRKVTDGVVTDEIHYLSAIEEGNYVIAQANSNLDEEGHFVEDLVTCRSKGESSLFSRDQVDYMDVSTQQVVSVGASLIPFLEHDDANRALMGANMQRQAVPTLRADKPLVGTGMERAVAVDSGVTAVAKRGGVVQYVDASRIVIKVNEDEMYPGEAGIDIYNLTKYTRSNQNTCINQMPCVSLGEPVERGDVLADGPSTDLGELALGQNMRVAFMPWNGYNFEDSILVSERVVQEDRFTTIHIQELACVSRDTKLGPEEITADIPNVGEAALSKLDESGIVYIGAEVTGGDILVGKVTPKGETQLTPEEKLLRAIFGEKASDVKDSSLRVPNGVSGTVIDVQVFTRDGVEKDKRALEIEEMQLKQAKKDLSEELQILEAGLFSRIRAVLVAGGVEAEKLDKLPRDRWLELGLTDEEKQNQLEQLAEQYDELKHEFEKKLEAKRRKITQGDDLAPGVLKIVKVYLAVKRRIQPGDKMAGRHGNKGVISKINPIEDMPYDENGTPVDIVLNPLGVPSRMNIGQILETHLGMAAKGIGDKINAMLKQQQEVAKLREFIQRAYDLGADVRQKVDLSTFSDEEVMRLAENLRKGMPIATPVFDGAKEAEIKELLKLGDLPTSGQIRLYDGRTGEQFERPVTVGYMYMLKLNHLVDDKMHARSTGSYSLVTQQPLGGKAQFGGQRFGEMEVWALEAYGAAYTLQEMLTVKSDDVNGRTKMYKNIVDGNHQMEPGMPESFNVLLKEIRSLGINIELEDE.

N6-acetyllysine is present on residues lysine 1022 and lysine 1200.

This sequence belongs to the RNA polymerase beta chain family. In terms of assembly, the RNAP catalytic core consists of 2 alpha, 1 beta, 1 beta' and 1 omega subunit. When a sigma factor is associated with the core the holoenzyme is formed, which can initiate transcription.

It catalyses the reaction RNA(n) + a ribonucleoside 5'-triphosphate = RNA(n+1) + diphosphate. Its function is as follows. DNA-dependent RNA polymerase catalyzes the transcription of DNA into RNA using the four ribonucleoside triphosphates as substrates. This is DNA-directed RNA polymerase subunit beta from Escherichia coli O81 (strain ED1a).